Reading from the N-terminus, the 222-residue chain is ATP-dependent Clp protease proteolytic subunit 1 (222 aa).

The active-site Nucleophile is Ser-121. Residue His-146 is part of the active site.

This sequence belongs to the peptidase S14 family. In terms of assembly, fourteen ClpP subunits assemble into 2 heptameric rings which stack back to back to give a disk-like structure with a central cavity, resembling the structure of eukaryotic proteasomes.

The protein localises to the cytoplasm. It carries out the reaction Hydrolysis of proteins to small peptides in the presence of ATP and magnesium. alpha-casein is the usual test substrate. In the absence of ATP, only oligopeptides shorter than five residues are hydrolyzed (such as succinyl-Leu-Tyr-|-NHMec, and Leu-Tyr-Leu-|-Tyr-Trp, in which cleavage of the -Tyr-|-Leu- and -Tyr-|-Trp bonds also occurs).. In terms of biological role, cleaves peptides in various proteins in a process that requires ATP hydrolysis. Has a chymotrypsin-like activity. Plays a major role in the degradation of misfolded proteins. This chain is ATP-dependent Clp protease proteolytic subunit 1, found in Thermobifida fusca (strain YX).